The primary structure comprises 191 residues: Shikimate kinase (191 aa).

An ATP-binding site is contributed by 24–29 (GSGKTS). Residue Thr-28 coordinates Mg(2+). Substrate-binding residues include Asp-46, Arg-70, and Gly-92. Arg-130 contributes to the ATP binding site. Arg-149 contributes to the substrate binding site.

Belongs to the shikimate kinase family. As to quaternary structure, monomer. The cofactor is Mg(2+).

It localises to the cytoplasm. It catalyses the reaction shikimate + ATP = 3-phosphoshikimate + ADP + H(+). Its pathway is metabolic intermediate biosynthesis; chorismate biosynthesis; chorismate from D-erythrose 4-phosphate and phosphoenolpyruvate: step 5/7. Catalyzes the specific phosphorylation of the 3-hydroxyl group of shikimic acid using ATP as a cosubstrate. The chain is Shikimate kinase from Synechococcus sp. (strain CC9902).